The primary structure comprises 896 residues: Zinc finger protein 574 (896 aa).

3 consecutive C2H2-type zinc fingers follow at residues 16–38 (YVCS…QNSH), 76–98 (YQCL…QELH), and 126–148 (YECV…RQTH). Ser164 carries the phosphoserine modification. The C2H2-type 4 zinc finger occupies 214-236 (YKCSECSQLFQLPADFLEHQATH). The interval 239–301 (APVPESQEPA…RARRNNSGEA (63 aa)) is disordered. A compositionally biased stretch (polar residues) spans 247 to 257 (PALQQEVQASS). Positions 274-287 (HSYELRNGEAIGRD) are enriched in basic and acidic residues. Ser298 bears the Phosphoserine mark. C2H2-type zinc fingers lie at residues 309–331 (LFCS…LRSH), 336–358 (FKCP…LGDH), 364–386 (FLCV…RRAH), and 392–413 (HSCP…RRTH). A disordered region spans residues 434 to 460 (FPEPAPAETGEPEAPEPPVSEETSAGP). C2H2-type zinc fingers lie at residues 466 to 489 (YRCL…RFVH), 495 to 517 (HKCS…LRTH), 523 to 545 (FPCP…RLTH), 551 to 573 (YRCG…RLVH), 579 to 601 (YRCQ…RYHH), and 607 to 630 (YKCR…LVVH). The C2H2-type 15; degenerate zinc finger occupies 636–659 (HRCPSCGAAFPSSLRLREHRCAAA). The C2H2-type 16 zinc-finger motif lies at 667–689 (FECGTCGKKVGSAARLQAHEAAH). Residues 687-733 (AAHAAAGPGEVLAKEPPAPRAPRATRAPVASPAGLGGTATASPAAPA) are disordered. The span at 707-732 (APRATRAPVASPAGLGGTATASPAAP) shows a compositional bias: low complexity. Residue Ser717 is modified to Phosphoserine. Thr724 is modified (phosphothreonine). Ser728 bears the Phosphoserine mark. 4 C2H2-type zinc fingers span residues 738-760 (LECS…RRIH), 766-788 (YPCP…RRLH), 794-816 (FACE…RRIH), and 822-844 (YSCP…RKTH). Position 832 is an asymmetric dimethylarginine (Arg832).

This sequence belongs to the krueppel C2H2-type zinc-finger protein family.

Its subcellular location is the nucleus. Its function is as follows. May be involved in transcriptional regulation. The chain is Zinc finger protein 574 (ZNF574) from Macaca fascicularis (Crab-eating macaque).